Reading from the N-terminus, the 1067-residue chain is Isoleucine--tRNA ligase (1067 aa).

Residues 49-59 carry the 'HIGH' region motif; the sequence is PYVSGAIHLGT. A 'KMSKS' region motif is present at residues 625 to 629; sequence KMSKS. Lys-628 serves as a coordination point for ATP.

It belongs to the class-I aminoacyl-tRNA synthetase family. IleS type 2 subfamily. In terms of assembly, monomer. Zn(2+) serves as cofactor.

It localises to the cytoplasm. The catalysed reaction is tRNA(Ile) + L-isoleucine + ATP = L-isoleucyl-tRNA(Ile) + AMP + diphosphate. Functionally, catalyzes the attachment of isoleucine to tRNA(Ile). As IleRS can inadvertently accommodate and process structurally similar amino acids such as valine, to avoid such errors it has two additional distinct tRNA(Ile)-dependent editing activities. One activity is designated as 'pretransfer' editing and involves the hydrolysis of activated Val-AMP. The other activity is designated 'posttransfer' editing and involves deacylation of mischarged Val-tRNA(Ile). In Pyrococcus abyssi (strain GE5 / Orsay), this protein is Isoleucine--tRNA ligase.